A 214-amino-acid chain; its full sequence is Large ribosomal subunit protein uL3 (214 aa).

The interval 129-157 (FGRGPMSHGSKNHRRPGSIGAGTTPGRVF) is disordered.

It belongs to the universal ribosomal protein uL3 family. Part of the 50S ribosomal subunit. Forms a cluster with proteins L14 and L19.

Functionally, one of the primary rRNA binding proteins, it binds directly near the 3'-end of the 23S rRNA, where it nucleates assembly of the 50S subunit. This Synechococcus sp. (strain JA-2-3B'a(2-13)) (Cyanobacteria bacterium Yellowstone B-Prime) protein is Large ribosomal subunit protein uL3.